A 968-amino-acid polypeptide reads, in one-letter code: Polycystin-2 (968 aa).

The span at 1 to 11 (MVNSSRVQPQQ) shows a compositional bias: polar residues. Disordered stretches follow at residues 1 to 28 (MVNS…DPGR) and 58 to 181 (RIRQ…LPLE). Residues 1 to 219 (MVNSSRVQPQ…STNREKYLKS (219 aa)) are Cytoplasmic-facing. Residues 62–83 (AAARDPPAGAAASPSPPLSSCS) show a composition bias toward low complexity. Phosphoserine is present on residues Ser76 and Ser80. Residues 95–107 (EAEEEEEEVEGEE) show a composition bias toward acidic residues. Residues 123-139 (RRSAASSAVSSVGARSR) show a composition bias toward low complexity. At Arg137 the chain carries Omega-N-methylarginine. Residues 220–241 (VLRELVTYLLFLIVLCILTYGM) traverse the membrane as a helical segment. Residues 242–468 (MSSNVYYYTR…PLKLIRYVTT (227 aa)) are Extracellular-facing. N-linked (GlcNAc...) asparagine glycans are attached at residues Asn299 and Asn305. N-linked (GlcNAc...) (complex) asparagine glycosylation occurs at Asn328. Cys331 and Cys344 are joined by a disulfide. N-linked (GlcNAc...) asparagine glycans are attached at residues Asn362 and Asn375. A helical transmembrane segment spans residues 469-489 (FDFFLAACEIIFCFFIFYYVV). Over 490-505 (EEILEIRIHKLHYFRS) the chain is Cytoplasmic. A helical transmembrane segment spans residues 506–526 (FWNCLDVVIVVLSVVAIGINI). Residues 527–552 (YRTSNVEVLLQFLEDQNTFPNFEHLA) are Extracellular-facing. A helical membrane pass occupies residues 553–573 (YWQIQFNNIAAVTVFFVWIKL). Residue Gln557 coordinates cholesterol. Residues 574-597 (FKFINFNRTMSQLSTTMSRCAKDL) lie on the Cytoplasmic side of the membrane. Residues 598 to 619 (FGFAIMFFIIFLAYAQLAYLVF) form a helical membrane-spanning segment. Over 620-631 (GTQVDDFSTFQE) the chain is Extracellular. An intramembrane region (pore-forming) is located at residues 632-646 (CIFTQFRIILGDINF). Leu641 is a Ca(2+) binding site. The Selectivity filter signature appears at 641 to 643 (LGD). Over 647–654 (AEIEEANR) the chain is Extracellular. A helical membrane pass occupies residues 655–675 (VLGPIYFTTFVFFMFFILLNM). At 676 to 968 (FLAIINDTYS…GGNGSSNVHV (293 aa)) the chain is on the cytoplasmic side. One can recognise an EF-hand domain in the interval 750–785 (HTDAEIEAIFTKYDQDGDQELTEHEHQQMRDDLEKE). Residues Asp763, Asp765, Asp767, Glu769, and Glu774 each contribute to the Ca(2+) site. The interval 764–831 (QDGDQELTEH…HSSRRRGSIS (68 aa)) is disordered. Basic and acidic residues predominate over residues 770-795 (LTEHEHQQMRDDLEKEREDLDLDHSS). Residues 796–807 (LPRPMSSRSFPR) show a composition bias toward low complexity. Ser801, Ser808, Ser812, and Ser829 each carry phosphoserine. The linker stretch occupies residues 803 to 822 (RSFPRSLDDSEEDDDEDSGH). The tract at residues 810–821 (DDSEEDDDEDSG) is important for interaction with PACS1 and PACS2. Residues 833-872 (GVSYEEFQVLVRRVDRMEHSIGSIVSKIDAVIVKLEIMER) are a coiled coil. The tract at residues 917 to 968 (ESDDAASQISHGLGTPVGLNGQPRPRSSRPSSSQSTEGMEGAGGNGSSNVHV) is disordered. A compositionally biased stretch (low complexity) spans 938–951 (QPRPRSSRPSSSQS).

The protein belongs to the polycystin family. Homotetramer. Component of the heterotetrameric polycystin channel complex with PKD1; the tetramer contains one PKD1 chain and three PKD2 chains. Isoform 1 interacts with PKD1 while isoform 3 does not. Interacts with PKD1L1; probably forms a Ca(2+) channel. Interacts with CD2AP. Interacts with HAX1. Interacts with NEK8. Part of a complex containing AKAP5, ADCY5, ADCY6 and PDE4C. Interacts (via C-terminus) with TRPV4 (via C-terminus). Interacts (via C-terminal acidic region) with PACS1 and PACS2; these interactions retain the protein in the endoplasmic reticulum and prevent trafficking to the cell membrane. Interacts with TMEM33. Form a heterotetramer with TRPC1 with a 2:2 stoichiometry; has distinct channel properties separate from PKD2 or TRPC1 homomers alone. Interacts with TMEM120A; TMEM120A inhibits PKD2 channel activity through the physical association of PKD2 with TMEM120A. Interacts (via N-terminus) with RYR2; regulates RYR2 channel activity. Phosphorylated. Phosphorylation is important for protein function; a mutant that lacks the N-terminal phosphorylation sites cannot complement a zebrafish pkd2-deficient mutant. PKD-mediated phosphorylation at the C-terminus regulates its function in the release of Ca(2+) stores from the endoplasmic reticulum. Phosphorylation at Ser-812 regulates PKD2 trafficking. Phosphorylation at Ser-76 is required for PKD2 trafficking to or retention at the lateral plasma membrane. Phosphorylation at Ser-801, Ser-812 and Ser-829 regulates PKD2 channel activity. In terms of processing, N-glycosylated. The four subunits in a tetramer probably differ in the extent of glycosylation; simultaneous glycosylation of all experimentally validated sites would probably create steric hindrance. Thus, glycosylation at Asn-305 is not compatible with glycosylation at Asn-328; only one of these two residues is glycosylated at a given time. Post-translationally, sumoylated by SUMO1; sumoylation regulates PKD2 membrane recycling and is necessary for intravascular pressure-induced arterial contractility. In terms of tissue distribution, detected in fetal and adult kidney. Detected at the thick ascending limb of the loop of Henle, at distal tubules, including the distal convoluted tubule and cortical collecting tubules, with weak staining of the collecting duct. Detected on placenta syncytiotrophoblasts (at protein level). Strongly expressed in ovary, fetal and adult kidney, testis, and small intestine. Not detected in peripheral leukocytes.

The protein resides in the cell projection. It is found in the cilium membrane. Its subcellular location is the endoplasmic reticulum membrane. The protein localises to the cell membrane. It localises to the basolateral cell membrane. The protein resides in the cytoplasmic vesicle membrane. It is found in the golgi apparatus. Its subcellular location is the vesicle. The protein localises to the secreted. It localises to the extracellular exosome. It carries out the reaction K(+)(in) = K(+)(out). The enzyme catalyses Na(+)(in) = Na(+)(out). The catalysed reaction is Ca(2+)(in) = Ca(2+)(out). Channel activity is regulated by phosphorylation. Channel activity is regulated by intracellular Ca(2+). At the endoplasmic reticulum membrane (ER), TMEM33 enhances its channel activity. TMEM120A inhibits the channel activity of PKD2, and mediates mechanosensitivity of the PKD2-TMEM120A channel complex. PKD1/PKD2 complex on the plasma membrane is activated by PKD1 N-terminus. In terms of biological role, forms a nonselective cation channel. Can function as a homotetrameric ion channel or can form heteromer with PKD1. Displays distinct function depending on its subcellular localization and regulation by its binding partners. In primary cilium functions as a cation channel, with a preference for monovalent cations over divalent cations that allows K(+), Na(+) and Ca(2+) influx, with low selectivity for Ca(2+). Involved in fluid-flow mechanosensation by the primary cilium in renal epithelium. In the endoplasmic reticulum, likely functions as a K(+) channel to facilitate Ca(2+) release. The heterotetrameric PKD1/PKD2 channel has higher Ca(2+) permeability than homomeric PKD2 channel and acts as a primarily Ca(2+)-permeable channel. Interacts with and acts as a regulator of a number of other channels, such as TRPV4, TRPC1, IP3R, RYR2, ultimately further affecting intracellular signaling, to modulate intracellular Ca(2+) signaling. Together with TRPV4, forms mechano- and thermosensitive channels in cilium. In cardiomyocytes, PKD2 modulates Ca(2+) release from stimulated RYR2 receptors through direct association. Also involved in left-right axis specification via its role in sensing nodal flow; forms a complex with PKD1L1 in cilia to facilitate flow detection in left-right patterning. Acts as a regulator of cilium length together with PKD1. Mediates systemic blood pressure and contributes to the myogenic response in cerebral arteries though vasoconstriction. The chain is Polycystin-2 from Homo sapiens (Human).